A 375-amino-acid polypeptide reads, in one-letter code: Carbamoyl phosphate synthase small chain (375 aa).

The CPSase stretch occupies residues 1-185 (MTQPAILVLE…LNANAFVQAE (185 aa)). The L-glutamine site is built by serine 47, glycine 237, and glycine 239. The Glutamine amidotransferase type-1 domain occupies 189–375 (KVVAYDYGVK…FVASMAEAKS (187 aa)). Cysteine 265 acts as the Nucleophile in catalysis. L-glutamine is bound by residues leucine 266, glutamine 269, asparagine 307, glycine 309, and phenylalanine 310. Catalysis depends on residues histidine 349 and glutamate 351.

This sequence belongs to the CarA family. In terms of assembly, composed of two chains; the small (or glutamine) chain promotes the hydrolysis of glutamine to ammonia, which is used by the large (or ammonia) chain to synthesize carbamoyl phosphate. Tetramer of heterodimers (alpha,beta)4.

It carries out the reaction hydrogencarbonate + L-glutamine + 2 ATP + H2O = carbamoyl phosphate + L-glutamate + 2 ADP + phosphate + 2 H(+). It catalyses the reaction L-glutamine + H2O = L-glutamate + NH4(+). The protein operates within amino-acid biosynthesis; L-arginine biosynthesis; carbamoyl phosphate from bicarbonate: step 1/1. It functions in the pathway pyrimidine metabolism; UMP biosynthesis via de novo pathway; (S)-dihydroorotate from bicarbonate: step 1/3. Its function is as follows. Small subunit of the glutamine-dependent carbamoyl phosphate synthetase (CPSase). CPSase catalyzes the formation of carbamoyl phosphate from the ammonia moiety of glutamine, carbonate, and phosphate donated by ATP, constituting the first step of 2 biosynthetic pathways, one leading to arginine and/or urea and the other to pyrimidine nucleotides. The small subunit (glutamine amidotransferase) binds and cleaves glutamine to supply the large subunit with the substrate ammonia. The polypeptide is Carbamoyl phosphate synthase small chain (Xanthomonas campestris pv. campestris (strain ATCC 33913 / DSM 3586 / NCPPB 528 / LMG 568 / P 25)).